The following is an 89-amino-acid chain: Large ribosomal subunit protein bL31B (89 aa).

Belongs to the bacterial ribosomal protein bL31 family. Type B subfamily. In terms of assembly, part of the 50S ribosomal subunit.

In Pseudomonas fluorescens (strain ATCC BAA-477 / NRRL B-23932 / Pf-5), this protein is Large ribosomal subunit protein bL31B.